The chain runs to 822 residues: Myosin-D (822 aa).

A Myosin motor domain is found at leucine 95–arginine 770. An ATP-binding site is contributed by glycine 189–threonine 196. The interval serine 660–aspartate 670 is actin-binding. The tract at residues alanine 772–cysteine 822 is tail.

It belongs to the TRAFAC class myosin-kinesin ATPase superfamily. Myosin family.

The protein resides in the cell membrane. Its subcellular location is the cytoplasm. Functionally, myosins are actin-based motor molecules with ATPase activity. Unconventional myosins serve in intracellular movements. Their highly divergent tails are presumed to bind to membranous compartments, which would be moved relative to actin filaments. The chain is Myosin-D from Toxoplasma gondii.